We begin with the raw amino-acid sequence, 391 residues long: Formate-dependent phosphoribosylglycinamide formyltransferase (391 aa).

N(1)-(5-phospho-beta-D-ribosyl)glycinamide-binding positions include 18-19 (EL) and E78. ATP contacts are provided by residues R110, K151, 156-161 (SSGKGQ), 191-194 (EEFI), and E199. The 191-residue stretch at 115–305 (DLAAQQLGLR…EFELHLRAVL (191 aa)) folds into the ATP-grasp domain. Mg(2+)-binding residues include E264 and E276. N(1)-(5-phospho-beta-D-ribosyl)glycinamide is bound by residues D283, K353, and 360 to 361 (RR).

Belongs to the PurK/PurT family. In terms of assembly, homodimer.

It catalyses the reaction N(1)-(5-phospho-beta-D-ribosyl)glycinamide + formate + ATP = N(2)-formyl-N(1)-(5-phospho-beta-D-ribosyl)glycinamide + ADP + phosphate + H(+). Its pathway is purine metabolism; IMP biosynthesis via de novo pathway; N(2)-formyl-N(1)-(5-phospho-D-ribosyl)glycinamide from N(1)-(5-phospho-D-ribosyl)glycinamide (formate route): step 1/1. Functionally, involved in the de novo purine biosynthesis. Catalyzes the transfer of formate to 5-phospho-ribosyl-glycinamide (GAR), producing 5-phospho-ribosyl-N-formylglycinamide (FGAR). Formate is provided by PurU via hydrolysis of 10-formyl-tetrahydrofolate. This is Formate-dependent phosphoribosylglycinamide formyltransferase from Synechococcus elongatus (strain ATCC 33912 / PCC 7942 / FACHB-805) (Anacystis nidulans R2).